A 79-amino-acid chain; its full sequence is Small ribosomal subunit protein uS17 (79 aa).

Belongs to the universal ribosomal protein uS17 family. In terms of assembly, part of the 30S ribosomal subunit.

In terms of biological role, one of the primary rRNA binding proteins, it binds specifically to the 5'-end of 16S ribosomal RNA. The chain is Small ribosomal subunit protein uS17 from Rhizobium etli (strain CIAT 652).